The sequence spans 268 residues: MADQSIISALVLGLIEGLTEFIPVSSTAHVLLAGHFLGFRSPGNTFAVLIQLGAILAILLVYFQKLLSIALALPTSVRARRFVLSVLLAFLPAALIGAAAHGFIKSVLFETPMLICVVLIVGGIILYVIDRLPLTPRYTDVFDYPPSLALKIGLFQCLAMIPGTSRSGATIAGALLMGTDKRSAAEFSFFLAMPTMVGAFALDLYKNREALSIDDIGLIAAGFIAAFIAGIFVVRSLLDFVSHRGFTPFAIWRILVGTAGLVGLWLLG.

7 helical membrane passes run 5 to 25 (SIIS…IPVS), 43 to 63 (GNTF…LVYF), 84 to 104 (LSVL…HGFI), 109 to 129 (FETP…LYVI), 184 to 204 (AAEF…ALDL), 213 to 233 (IDDI…GIFV), and 248 to 268 (PFAI…WLLG).

It belongs to the UppP family.

It is found in the cell inner membrane. It catalyses the reaction di-trans,octa-cis-undecaprenyl diphosphate + H2O = di-trans,octa-cis-undecaprenyl phosphate + phosphate + H(+). In terms of biological role, catalyzes the dephosphorylation of undecaprenyl diphosphate (UPP). Confers resistance to bacitracin. The protein is Undecaprenyl-diphosphatase of Sinorhizobium medicae (strain WSM419) (Ensifer medicae).